The chain runs to 235 residues: 2-C-methyl-D-erythritol 4-phosphate cytidylyltransferase (235 aa).

Belongs to the IspD/TarI cytidylyltransferase family. IspD subfamily.

It carries out the reaction 2-C-methyl-D-erythritol 4-phosphate + CTP + H(+) = 4-CDP-2-C-methyl-D-erythritol + diphosphate. The protein operates within isoprenoid biosynthesis; isopentenyl diphosphate biosynthesis via DXP pathway; isopentenyl diphosphate from 1-deoxy-D-xylulose 5-phosphate: step 2/6. Catalyzes the formation of 4-diphosphocytidyl-2-C-methyl-D-erythritol from CTP and 2-C-methyl-D-erythritol 4-phosphate (MEP). The protein is 2-C-methyl-D-erythritol 4-phosphate cytidylyltransferase of Mycolicibacterium paratuberculosis (strain ATCC BAA-968 / K-10) (Mycobacterium paratuberculosis).